Consider the following 461-residue polypeptide: Alcaligin biosynthesis enzyme (461 aa).

9-15 (VAIGIGP) contacts FAD.

This sequence belongs to the lysine N(6)-hydroxylase/L-ornithine N(5)-oxygenase family. Requires FAD as cofactor.

It functions in the pathway siderophore biosynthesis; alcaligin biosynthesis. The polypeptide is Alcaligin biosynthesis enzyme (alcA) (Bordetella parapertussis (strain 12822 / ATCC BAA-587 / NCTC 13253)).